We begin with the raw amino-acid sequence, 231 residues long: Claudin-10 (231 aa).

A helical membrane pass occupies residues 1-21 (MASTASEIIAFMVSISGWVLV). The Extracellular portion of the chain corresponds to 22–80 (SSTLPTDYWKVSTIDGTVITTATYWANLWKTCVTDSTGVSNCKDFPSMLALDGYIQACR). The helical transmembrane segment at 81-101 (GLMIAAVSLGFFGSIFALIGM) threads the bilayer. At 102 to 115 (KCTKVGGSDKAKAK) the chain is on the cytoplasmic side. The helical transmembrane segment at 116–136 (IACLAGIVFILSGLCSMTGCS) threads the bilayer. The Extracellular portion of the chain corresponds to 137 to 160 (LYANKITTEFFDPLFVEQKYELGA). Residues 161 to 181 (ALFIGWAGASLCLIGGVIFCF) form a helical membrane-spanning segment. At 182-231 (SISDNNKAPRMGYTYNGATSVMSSRTKYHGREGDLKTPNPSKQFDKNAYV) the chain is on the cytoplasmic side.

Belongs to the claudin family. As to quaternary structure, can form homodimers both in trans (interaction between CLDN10 molecules in opposing membranes) and in cis (interaction between CLDN10 molecules within one membrane). Interacts with CLDN19.

It localises to the cell junction. It is found in the tight junction. The protein localises to the cell membrane. The enzyme catalyses Na(+)(in) = Na(+)(out). The catalysed reaction is Li(+)(in) = Li(+)(out). It carries out the reaction K(+)(in) = K(+)(out). It catalyses the reaction Rb(+)(in) = Rb(+)(out). The enzyme catalyses Cs(+)(in) = Cs(+)(out). The catalysed reaction is NH4(+)(in) = NH4(+)(out). It carries out the reaction methylamine(out) = methylamine(in). It catalyses the reaction Mg(2+)(in) = Mg(2+)(out). The enzyme catalyses Ca(2+)(in) = Ca(2+)(out). The catalysed reaction is Sr(2+)(in) = Sr(2+)(out). It carries out the reaction chloride(in) = chloride(out). It catalyses the reaction nitrate(in) = nitrate(out). Its function is as follows. Forms paracellular channels: polymerizes in tight junction strands with cation- and anion-selective channels through the strands, conveying epithelial permeability in a process known as paracellular tight junction permeability. In sweat glands and in the thick ascending limb (TAL) of Henle's loop in kidney, it controls paracellular sodium permeability which is essential for proper sweat production and renal function. In renal proximal tubules, it conveys selective chloride over hydrogencarbonate anion permeability which is required for renal chloride reabsorption and salt homeostasis. This Bos taurus (Bovine) protein is Claudin-10 (CLDN10).